Consider the following 308-residue polypeptide: UPF0282 protein PYRAB09800 (308 aa).

It belongs to the UPF0282 family.

In Pyrococcus abyssi (strain GE5 / Orsay), this protein is UPF0282 protein PYRAB09800.